The following is a 312-amino-acid chain: 2-aminophenol 1,6-dioxygenase subunit beta (312 aa).

Fe cation-binding residues include histidine 13, histidine 62, and glutamate 251.

The protein belongs to the LigB/MhpB extradiol dioxygenase family. The APD complex is a heterotetramer of 2 alpha (CnbCa) and 2 beta (CnbCb) subunits. Requires Fe(2+) as cofactor.

It carries out the reaction 2-aminophenol + O2 = 2-aminomuconate 6-semialdehyde. The catalysed reaction is 2-amino-5-chlorophenol + O2 = 2-amino-5-chloromuconate 6-semialdehyde. The protein operates within xenobiotic degradation; nitrobenzene degradation. It functions in the pathway xenobiotic degradation; 4-chloronitrobenzene degradation. Complete loss of activity in the presence of Ni(2+), Co(2+), Cd(2+), Zn(2+) and hydrogen peroxide, however activity with hydrogen peroxide partially restored upon addition of excess ascorbate. Partially inhibited by Fe(2+), Mg(2+), Ca(2+), Mn(2+), Cu(2+) and also by EDTA, at 2 mM concentration. Total activity inhibited in the presence of catechol or 4-nitrocatechol but completely restored after removal of catechol and addition of 2 mM Fe(2+) and 5 mM ascorbate. Its function is as follows. Component of the 2-aminophenol 1,6-dioxygenase (APD) complex that catalyzes the ring fission of 2-aminophenol to produce 2-aminomuconic semialdehyde. CnbCb seems to be the catalytic subunit of the complex. Also active on other substrates such as 2-amino-5-chlorophenol (68% activity), protocatechuate (33% activity) and catechol (5% activity). Both 2-aminophenol and 2-amino-5-cholorophenol are likely native substrates for this dioxygenase which is involved in the reductive degradation pathway of both nitrobenzene (NB) and 4-chloronitrobenzene (4-CNB), allowing C.testosteroni strain CNB-1 to grow on these compounds as sole source of carbon, nitrogen, and energy. This is 2-aminophenol 1,6-dioxygenase subunit beta from Comamonas testosteroni (Pseudomonas testosteroni).